A 226-amino-acid polypeptide reads, in one-letter code: UPF0758 protein GK2618 (226 aa).

In terms of domain architecture, MPN spans 104–226 (VIRCPEDGAK…FISLKEKGYV (123 aa)). Zn(2+) is bound by residues H175, H177, and D188. The JAMM motif motif lies at 175–188 (HNHPSGDPTPSRED).

It belongs to the UPF0758 family.

This is UPF0758 protein GK2618 from Geobacillus kaustophilus (strain HTA426).